The primary structure comprises 128 residues: Large ribosomal subunit protein eL22 (128 aa).

Position 62 is a phosphothreonine (T62). Residue S66 is modified to Phosphoserine. N6-succinyllysine is present on K69.

The protein belongs to the eukaryotic ribosomal protein eL22 family. Component of the large ribosomal subunit.

Its subcellular location is the cytoplasm. Its function is as follows. Component of the large ribosomal subunit. The ribosome is a large ribonucleoprotein complex responsible for the synthesis of proteins in the cell. In Oryctolagus cuniculus (Rabbit), this protein is Large ribosomal subunit protein eL22 (RPL22).